We begin with the raw amino-acid sequence, 257 residues long: Granzyme M (257 aa).

A signal peptide spans 1–23 (MEACVSSLLVLALGALSVGSSFG). The propeptide at 24-25 (TQ) is activation peptide. The Peptidase S1 domain occupies 26–254 (IIGGREVIPH…YVSWIRKVTG (229 aa)). C51 and C67 are oxidised to a cystine. Active-site charge relay system residues include H66 and D111. 3 disulfide bridges follow: C145–C213, C176–C192, and C203–C230. N-linked (GlcNAc...) asparagine glycosylation occurs at N177. The active-site Charge relay system is S207.

This sequence belongs to the peptidase S1 family. Granzyme subfamily. In terms of tissue distribution, highly and constitutively expressed in activated natural killer (NK) cells.

It is found in the secreted. It localises to the cytoplasmic granule. In terms of biological role, cleaves peptide substrates after methionine, leucine, and norleucine. Physiological substrates include EZR, alpha-tubulins and the apoptosis inhibitor BIRC5/Survivin. Promotes caspase activation and subsequent apoptosis of target cells. The polypeptide is Granzyme M (GZMM) (Homo sapiens (Human)).